The primary structure comprises 140 residues: Nucleoside diphosphate kinase (140 aa).

ATP is bound by residues K11, F59, R87, T93, R104, and N114. Residue H117 is the Pros-phosphohistidine intermediate of the active site.

Belongs to the NDK family. Homotetramer. It depends on Mg(2+) as a cofactor.

Its subcellular location is the cytoplasm. The catalysed reaction is a 2'-deoxyribonucleoside 5'-diphosphate + ATP = a 2'-deoxyribonucleoside 5'-triphosphate + ADP. The enzyme catalyses a ribonucleoside 5'-diphosphate + ATP = a ribonucleoside 5'-triphosphate + ADP. Major role in the synthesis of nucleoside triphosphates other than ATP. The ATP gamma phosphate is transferred to the NDP beta phosphate via a ping-pong mechanism, using a phosphorylated active-site intermediate. The sequence is that of Nucleoside diphosphate kinase from Rickettsia peacockii (strain Rustic).